The following is a 313-amino-acid chain: Aspartate carbamoyltransferase catalytic subunit (313 aa).

2 residues coordinate carbamoyl phosphate: Arg54 and Thr55. L-aspartate is bound at residue Lys82. The carbamoyl phosphate site is built by Arg104, His132, and Gln135. Arg165 and Arg219 together coordinate L-aspartate. Carbamoyl phosphate-binding residues include Gly260 and Pro261.

The protein belongs to the aspartate/ornithine carbamoyltransferase superfamily. ATCase family. As to quaternary structure, heterododecamer (2C3:3R2) of six catalytic PyrB chains organized as two trimers (C3), and six regulatory PyrI chains organized as three dimers (R2).

It catalyses the reaction carbamoyl phosphate + L-aspartate = N-carbamoyl-L-aspartate + phosphate + H(+). It functions in the pathway pyrimidine metabolism; UMP biosynthesis via de novo pathway; (S)-dihydroorotate from bicarbonate: step 2/3. Functionally, catalyzes the condensation of carbamoyl phosphate and aspartate to form carbamoyl aspartate and inorganic phosphate, the committed step in the de novo pyrimidine nucleotide biosynthesis pathway. In Thermobifida fusca (strain YX), this protein is Aspartate carbamoyltransferase catalytic subunit.